Consider the following 48-residue polypeptide: Small polypeptide DEVIL 19 (48 aa).

The interval 13–44 is required for DVL/RTFL small polypeptide activity; it reads AFTSKCVSLVKEQRARLYILRRCATMLCCWYI. Residues 25-42 form a helical membrane-spanning segment; the sequence is QRARLYILRRCATMLCCW.

This sequence belongs to the DVL/RTFL small polypeptides family.

The protein resides in the cell membrane. Its function is as follows. Small polypeptide acting as a regulatory molecule which coordinates cellular responses required for differentiation, growth and development, probably by restricting polar cell proliferation in lateral organs and coordinating socket cell recruitment and differentiation at trichome sites. The sequence is that of Small polypeptide DEVIL 19 from Arabidopsis thaliana (Mouse-ear cress).